The sequence spans 1345 residues: DNA-directed RNA polymerase subunit beta' (1345 aa).

Cys60, Cys62, Cys75, and Cys78 together coordinate Zn(2+). The Mg(2+) site is built by Asp536, Asp538, and Asp540. Positions 895, 974, 981, and 984 each coordinate Zn(2+).

This sequence belongs to the RNA polymerase beta' chain family. In terms of assembly, the RNAP catalytic core consists of 2 alpha, 1 beta, 1 beta' and 1 omega subunit. When a sigma factor is associated with the core the holoenzyme is formed, which can initiate transcription. Mg(2+) is required as a cofactor. Zn(2+) serves as cofactor.

The enzyme catalyses RNA(n) + a ribonucleoside 5'-triphosphate = RNA(n+1) + diphosphate. DNA-dependent RNA polymerase catalyzes the transcription of DNA into RNA using the four ribonucleoside triphosphates as substrates. The sequence is that of DNA-directed RNA polymerase subunit beta' from Bifidobacterium longum (strain DJO10A).